Reading from the N-terminus, the 340-residue chain is Nesprin-4 (340 aa).

Disordered regions lie at residues 1 to 86 (MAQF…DGGK) and 254 to 277 (HRRR…DAML). The Cytoplasmic segment spans residues 1–291 (MAQFPLLGHG…GVPAPASRRP (291 aa)). A compositionally biased stretch (basic and acidic residues) spans 53–63 (APEHFMDEPKS). A KASH domain is found at 283-340 (VPAPASRRPLTFLLLLLFLLLVGATLLLPLSGVPCCSHTRLARTPYLVLSYVNGLPPI). Residues 292–312 (LTFLLLLLFLLLVGATLLLPL) traverse the membrane as a helical; Anchor for type IV membrane protein segment. At 313 to 340 (SGVPCCSHTRLARTPYLVLSYVNGLPPI) the chain is on the perinuclear space side.

It belongs to the nesprin family. In terms of assembly, core component of LINC complexes which are composed of inner nuclear membrane SUN domain-containing proteins coupled to outer nuclear membrane KASH domain-containing nesprins. SUN and KASH domain-containing proteins seem to bind each other promiscuously; however, differentially expression of LINC complex constituents can give rise to specific assemblies. Probably part of a SUN1-containing LINC complex. Interacts with kinesins KIF5B and KLC1.

The protein resides in the nucleus outer membrane. As a component of the LINC (LInker of Nucleoskeleton and Cytoskeleton) complex, involved in the connection between the nuclear lamina and the cytoskeleton. The nucleocytoplasmic interactions established by the LINC complex play an important role in the transmission of mechanical forces across the nuclear envelope and in nuclear movement and positioning. Behaves as a kinesin cargo, providing a functional binding site for kinesin-1 at the nuclear envelope. Hence may contribute to the establishment of secretory epithelial morphology, by promoting kinesin-dependent apical migration of the centrosome and Golgi apparatus and basal localization of the nucleus. This is Nesprin-4 (Syne4) from Rattus norvegicus (Rat).